Consider the following 98-residue polypeptide: Putative septation protein SpoVG (98 aa).

This sequence belongs to the SpoVG family.

Essential for sporulation. Interferes with or is a negative regulator of the pathway leading to asymmetric septation. The protein is Putative septation protein SpoVG of Shouchella clausii (strain KSM-K16) (Alkalihalobacillus clausii).